The primary structure comprises 375 residues: Succinyl-diaminopimelate desuccinylase (375 aa).

His-66 is a binding site for Zn(2+). Asp-68 is a catalytic residue. Asp-99 contacts Zn(2+). The active-site Proton acceptor is the Glu-133. 3 residues coordinate Zn(2+): Glu-134, Glu-162, and His-348.

This sequence belongs to the peptidase M20A family. DapE subfamily. In terms of assembly, homodimer. The cofactor is Zn(2+). Co(2+) serves as cofactor.

It carries out the reaction N-succinyl-(2S,6S)-2,6-diaminopimelate + H2O = (2S,6S)-2,6-diaminopimelate + succinate. It participates in amino-acid biosynthesis; L-lysine biosynthesis via DAP pathway; LL-2,6-diaminopimelate from (S)-tetrahydrodipicolinate (succinylase route): step 3/3. Its function is as follows. Catalyzes the hydrolysis of N-succinyl-L,L-diaminopimelic acid (SDAP), forming succinate and LL-2,6-diaminopimelate (DAP), an intermediate involved in the bacterial biosynthesis of lysine and meso-diaminopimelic acid, an essential component of bacterial cell walls. The sequence is that of Succinyl-diaminopimelate desuccinylase from Salmonella choleraesuis (strain SC-B67).